We begin with the raw amino-acid sequence, 105 residues long: MAEWSGEYISPYAEHGKKSEQVKKITVSIPLKVLKILTDERTRRQVNNLRHATNSELLCEAFLHAFTGQPLPDDADLRKERSDEIPEAAKEIMREMGINPETWEY.

This sequence belongs to the MetJ family. In terms of assembly, homodimer.

It localises to the cytoplasm. Functionally, this regulatory protein, when combined with SAM (S-adenosylmethionine) represses the expression of the methionine regulon and of enzymes involved in SAM synthesis. The chain is Met repressor from Shigella boydii serotype 18 (strain CDC 3083-94 / BS512).